A 153-amino-acid polypeptide reads, in one-letter code: Myoglobin (153 aa).

The Globin domain maps to 2-147; sequence GLNDQEWQQV…FRNDMASKYK (146 aa). Histidine 65 provides a ligand contact to nitrite. Histidine 65 is an O2 binding site. Histidine 93 contacts heme b.

This sequence belongs to the globin family. As to quaternary structure, monomeric.

The protein localises to the cytoplasm. Its subcellular location is the sarcoplasm. It catalyses the reaction Fe(III)-heme b-[protein] + nitric oxide + H2O = Fe(II)-heme b-[protein] + nitrite + 2 H(+). The enzyme catalyses H2O2 + AH2 = A + 2 H2O. In terms of biological role, monomeric heme protein which primary function is to store oxygen and facilitate its diffusion within muscle tissues. Reversibly binds oxygen through a pentacoordinated heme iron and enables its timely and efficient release as needed during periods of heightened demand. Depending on the oxidative conditions of tissues and cells, and in addition to its ability to bind oxygen, it also has a nitrite reductase activity whereby it regulates the production of bioactive nitric oxide. Under stress conditions, like hypoxia and anoxia, it also protects cells against reactive oxygen species thanks to its pseudoperoxidase activity. This is Myoglobin (MB) from Aptenodytes forsteri (Emperor penguin).